The chain runs to 115 residues: Large ribosomal subunit protein bL20 (115 aa).

Belongs to the bacterial ribosomal protein bL20 family.

Its function is as follows. Binds directly to 23S ribosomal RNA and is necessary for the in vitro assembly process of the 50S ribosomal subunit. It is not involved in the protein synthesizing functions of that subunit. The chain is Large ribosomal subunit protein bL20 from Prochlorococcus marinus (strain MIT 9303).